Reading from the N-terminus, the 635-residue chain is MCGIVGMVAGRDVSGLLLEGLRRLEYRGYDSAGIAVVGSDCALRLLRCEGRVQSLCALLGQSPLCGTMGIAHTRWATHGKPCAANAHPHCSESVAIVHNGIVENHRSLREMLVTRGYFFHSQTDSEVLAHLLHWELRYTAHLLLAVKKVLTQVRGTYGLLCMDAASPGRLIAARSGSPLAVGLGCGENFVTSDPLALAHVTQRFLYLEEGDIADVHRDSVCVHDAQGNVVARPVVTYQMQLCTQDKGTHRHHMHQEIWQQPHAIRHTLNAYMSFSSSSRAQVRTFGEDRVLDGTSCKTFERLFRRITRVRIIACGTSYHAGLVARYWFEAFAGVGCQVEIASEYRYRTSVVHAREIVLTISQSGETADTIAALRLAKTQGYLCAIAICNGARSTLVRESDAVLLTHAGSEIGVASTKSFTTQLVCLLVLTRMIAQAKKILTQEPEDALSAALQRLPQDVEHVLECEADVARCARHFVHAQHALFLGRGELYPIAIESALKLKEISYIHAEAYAAGELKHGPLALVDAQMPVVAIAPASPGVLFEKMASNIEEVRARGGMLYIFTDVPERFGPVCTPEADAPEGACSQIVTVPSVSPLTAPIFYAVPLQLLAYHIALLKGTDIDQPRNLAKSVTVE.

Cysteine 2 functions as the Nucleophile; for GATase activity in the catalytic mechanism. The region spanning 2 to 218 is the Glutamine amidotransferase type-2 domain; that stretch reads CGIVGMVAGR…EGDIADVHRD (217 aa). SIS domains lie at 299-439 and 472-625; these read FERL…AKKI and CARH…IDQP. Lysine 630 functions as the For Fru-6P isomerization activity in the catalytic mechanism.

As to quaternary structure, homodimer.

Its subcellular location is the cytoplasm. It carries out the reaction D-fructose 6-phosphate + L-glutamine = D-glucosamine 6-phosphate + L-glutamate. Functionally, catalyzes the first step in hexosamine metabolism, converting fructose-6P into glucosamine-6P using glutamine as a nitrogen source. The polypeptide is Glutamine--fructose-6-phosphate aminotransferase [isomerizing] (Treponema pallidum (strain Nichols)).